The following is a 430-amino-acid chain: Histidinol dehydrogenase (430 aa).

The NAD(+) site is built by Tyr129, Gln190, and Asn213. Residues Ser236, Gln258, and His261 each contribute to the substrate site. Zn(2+) is bound by residues Gln258 and His261. Active-site proton acceptor residues include Glu326 and His327. The substrate site is built by His327, Asp360, Glu414, and His419. A Zn(2+)-binding site is contributed by Asp360. His419 contacts Zn(2+).

The protein belongs to the histidinol dehydrogenase family. Requires Zn(2+) as cofactor.

The enzyme catalyses L-histidinol + 2 NAD(+) + H2O = L-histidine + 2 NADH + 3 H(+). The protein operates within amino-acid biosynthesis; L-histidine biosynthesis; L-histidine from 5-phospho-alpha-D-ribose 1-diphosphate: step 9/9. In terms of biological role, catalyzes the sequential NAD-dependent oxidations of L-histidinol to L-histidinaldehyde and then to L-histidine. This is Histidinol dehydrogenase from Gluconobacter oxydans (strain 621H) (Gluconobacter suboxydans).